The primary structure comprises 412 residues: Heat stress transcription factor A-3 (412 aa).

Residues Ile-53–Ser-147 mediate DNA binding. The tract at residues Arg-144–Gly-170 is disordered. The span at Pro-148–Thr-166 shows a compositional bias: low complexity. Positions Ser-159 to Phe-225 are hydrophobic repeat HR-A/B. Residues Thr-166–Leu-224 adopt a coiled-coil conformation. The short motif at Lys-238–Lys-254 is the Bipartite nuclear localization signal element. The AHA1 motif lies at Asp-277 to Asp-286. The AHA2 motif lies at Asp-381–Gly-390.

Belongs to the HSF family. Class A subfamily. In terms of assembly, homotrimer. Exhibits temperature-dependent phosphorylation.

Its subcellular location is the nucleus. In terms of biological role, transcriptional activator that specifically binds DNA sequence 5'-AGAAnnTTCT-3' known as heat shock promoter elements (HSE). Involved in heat stress response. Activated by DREB2A under heat stress. The protein is Heat stress transcription factor A-3 (HSFA3) of Arabidopsis thaliana (Mouse-ear cress).